The following is a 220-amino-acid chain: 14-3-3-like protein (220 aa).

This sequence belongs to the 14-3-3 family.

The sequence is that of 14-3-3-like protein from Spinacia oleracea (Spinach).